Reading from the N-terminus, the 119-residue chain is Large ribosomal subunit protein bL20 (119 aa).

Belongs to the bacterial ribosomal protein bL20 family.

In terms of biological role, binds directly to 23S ribosomal RNA and is necessary for the in vitro assembly process of the 50S ribosomal subunit. It is not involved in the protein synthesizing functions of that subunit. In Halorhodospira halophila (strain DSM 244 / SL1) (Ectothiorhodospira halophila (strain DSM 244 / SL1)), this protein is Large ribosomal subunit protein bL20.